We begin with the raw amino-acid sequence, 429 residues long: Trigger factor (429 aa).

The PPIase FKBP-type domain occupies 163–248 (GDFVVIDFVG…IKEIKVKETP (86 aa)).

It belongs to the FKBP-type PPIase family. Tig subfamily.

The protein resides in the cytoplasm. It carries out the reaction [protein]-peptidylproline (omega=180) = [protein]-peptidylproline (omega=0). Its function is as follows. Involved in protein export. Acts as a chaperone by maintaining the newly synthesized protein in an open conformation. Functions as a peptidyl-prolyl cis-trans isomerase. In Halothermothrix orenii (strain H 168 / OCM 544 / DSM 9562), this protein is Trigger factor.